Here is a 24-residue protein sequence, read N- to C-terminus: Coenzyme PQQ synthesis protein A (24 aa).

Residues 16–20 constitute a cross-link (pyrroloquinoline quinone (Glu-Tyr)); that stretch reads EITMY.

This sequence belongs to the PqqA family.

It functions in the pathway cofactor biosynthesis; pyrroloquinoline quinone biosynthesis. Its function is as follows. Required for coenzyme pyrroloquinoline quinone (PQQ) biosynthesis. PQQ is probably formed by cross-linking a specific glutamate to a specific tyrosine residue and excising these residues from the peptide. This chain is Coenzyme PQQ synthesis protein A, found in Burkholderia cenocepacia (strain ATCC BAA-245 / DSM 16553 / LMG 16656 / NCTC 13227 / J2315 / CF5610) (Burkholderia cepacia (strain J2315)).